Reading from the N-terminus, the 135-residue chain is Transcription antitermination protein NusB (135 aa).

Belongs to the NusB family.

Functionally, involved in transcription antitermination. Required for transcription of ribosomal RNA (rRNA) genes. Binds specifically to the boxA antiterminator sequence of the ribosomal RNA (rrn) operons. The polypeptide is Transcription antitermination protein NusB (Bdellovibrio bacteriovorus (strain ATCC 15356 / DSM 50701 / NCIMB 9529 / HD100)).